Reading from the N-terminus, the 1140-residue chain is Squamosa promoter-binding-like protein 15 (1140 aa).

Disordered regions lie at residues 73–112 (RVNA…LNLQ) and 124–177 (DVSP…GGNS). Composition is skewed to low complexity over residues 76 to 100 (AGLS…EALR) and 125 to 135 (VSPAATTVSSS). Over residues 164–177 (ASGGGGGGGGGGNS) the composition is skewed to gly residues. The segment at 184–261 (YPMCQVDDCR…AGHNRRRRKT (78 aa)) adopts an SBP-type zinc-finger fold. Positions 187, 192, 209, 212, 228, 231, 235, and 247 each coordinate Zn(2+). Residues 244 to 260 (KRSCRRRLAGHNRRRRK) carry the Bipartite nuclear localization signal motif. Disordered regions lie at residues 327–382 (NNGN…ADGF), 403–472 (TSNP…TPPY), 496–517 (LSSE…PVTH), and 558–597 (KDSE…DGQD). A compositionally biased stretch (polar residues) spans 345–375 (ASHSQQQDSVQRTTNGFEKQTNGLDKQTNGF). The segment covering 403–430 (TSNPDSNTSQSQGSSDSSGNNKSKSQST) has biased composition (low complexity). Basic and acidic residues predominate over residues 450 to 466 (RKNDALERSPEMYKQPD). Residues 496-514 (LSSESSNPLDERSPSSSPP) show a composition bias toward polar residues. The span at 579-593 (TSTSCSDHSPSTSNS) shows a compositional bias: low complexity.

Expressed in stems, leaf sheaths, and young panicles.

It localises to the nucleus. Functionally, trans-acting factor that binds specifically to the consensus nucleotide sequence 5'-TNCGTACAA-3'. The chain is Squamosa promoter-binding-like protein 15 (SPL15) from Oryza sativa subsp. indica (Rice).